The following is a 215-amino-acid chain: Urease accessory protein UreF (215 aa).

It belongs to the UreF family. In terms of assembly, ureD, UreF and UreG form a complex that acts as a GTP-hydrolysis-dependent molecular chaperone, activating the urease apoprotein by helping to assemble the nickel containing metallocenter of UreC. The UreE protein probably delivers the nickel.

The protein localises to the cytoplasm. Required for maturation of urease via the functional incorporation of the urease nickel metallocenter. The polypeptide is Urease accessory protein UreF (Paracoccus denitrificans (strain Pd 1222)).